The primary structure comprises 360 residues: DNA replication and repair protein RecF (360 aa).

Residue 33–40 participates in ATP binding; it reads GENGSGKT.

Belongs to the RecF family.

Its subcellular location is the cytoplasm. Functionally, the RecF protein is involved in DNA metabolism; it is required for DNA replication and normal SOS inducibility. RecF binds preferentially to single-stranded, linear DNA. It also seems to bind ATP. This Rickettsia akari (strain Hartford) protein is DNA replication and repair protein RecF.